Consider the following 139-residue polypeptide: Small capsomere-interacting protein (139 aa).

A compositionally biased stretch (low complexity) spans 100–120; that stretch reads SLTTPSLSSTPTSLTSMPGLS. A disordered region spans residues 100–139; that stretch reads SLTTPSLSSTPTSLTSMPGLSISGPSTTDTIDSKKKPKAK.

The protein belongs to the herpesviridae small capsomere-interacting protein family. In terms of assembly, interacts with the major capsid protein/MCP.

The protein resides in the virion. It is found in the host nucleus. Its function is as follows. Participates in the assembly of the infectious particles by decorating the outer surface of the capsid shell and thus forming a layer between the capsid and the tegument. Complexes composed of the major capsid protein and small capsomere-interacting protein/SCP assemble together in the host cytoplasm and are translocated to the nucleus, where they accumulate and participate in capsid assembly. This Saimiri sciureus (Common squirrel monkey) protein is Small capsomere-interacting protein.